The sequence spans 131 residues: UPF0102 protein YraN (131 aa).

It belongs to the UPF0102 family.

This is UPF0102 protein YraN from Salmonella arizonae (strain ATCC BAA-731 / CDC346-86 / RSK2980).